The following is a 51-amino-acid chain: Sperm protamine P1 (51 aa).

It belongs to the protamine P1 family. Testis.

Its subcellular location is the nucleus. The protein resides in the chromosome. In terms of biological role, protamines substitute for histones in the chromatin of sperm during the haploid phase of spermatogenesis. They compact sperm DNA into a highly condensed, stable and inactive complex. The chain is Sperm protamine P1 (PRM1) from Nasalis larvatus (Proboscis monkey).